We begin with the raw amino-acid sequence, 287 residues long: Elongation factor Ts (287 aa).

The involved in Mg(2+) ion dislocation from EF-Tu stretch occupies residues Thr80 to Leu83.

Belongs to the EF-Ts family.

The protein localises to the cytoplasm. In terms of biological role, associates with the EF-Tu.GDP complex and induces the exchange of GDP to GTP. It remains bound to the aminoacyl-tRNA.EF-Tu.GTP complex up to the GTP hydrolysis stage on the ribosome. This chain is Elongation factor Ts, found in Pseudomonas putida (strain ATCC 700007 / DSM 6899 / JCM 31910 / BCRC 17059 / LMG 24140 / F1).